A 301-amino-acid chain; its full sequence is Tetratricopeptide repeat domain-containing protein PYG7, chloroplastic (301 aa).

The transit peptide at 1-61 (MFESNMVLQT…FHDYVFAEIS (61 aa)) directs the protein to the chloroplast. 2 helical membrane-spanning segments follow: residues 82 to 102 (TFLL…AAAA) and 121 to 141 (IQLS…FYVI). 3 TPR repeats span residues 168-201 (ATEL…WDGD), 206-239 (AQVY…QPGY), and 240-273 (VTAW…DPNN).

In terms of assembly, interacts with PSA3.

The protein localises to the plastid. Its subcellular location is the chloroplast thylakoid membrane. In terms of biological role, nuclear genome-encoded factor required for the accumulation of photosystem I (PSI). Functions as a PSI biogenesis factor. Cooperates with PSA3 to promote the stable assembly of PSI in the thylakoid membrane. May target primarily the PsaC subunit. This is Tetratricopeptide repeat domain-containing protein PYG7, chloroplastic from Arabidopsis thaliana (Mouse-ear cress).